Here is a 102-residue protein sequence, read N- to C-terminus: Small ribosomal subunit protein uS10 (102 aa).

It belongs to the universal ribosomal protein uS10 family. As to quaternary structure, part of the 30S ribosomal subunit.

Its function is as follows. Involved in the binding of tRNA to the ribosomes. This is Small ribosomal subunit protein uS10 from Methanobrevibacter smithii (strain ATCC 35061 / DSM 861 / OCM 144 / PS).